The sequence spans 603 residues: DNA mismatch repair protein MutL (603 aa).

It belongs to the DNA mismatch repair MutL/HexB family.

Functionally, this protein is involved in the repair of mismatches in DNA. It is required for dam-dependent methyl-directed DNA mismatch repair. May act as a 'molecular matchmaker', a protein that promotes the formation of a stable complex between two or more DNA-binding proteins in an ATP-dependent manner without itself being part of a final effector complex. This is DNA mismatch repair protein MutL from Nitrobacter hamburgensis (strain DSM 10229 / NCIMB 13809 / X14).